A 429-amino-acid polypeptide reads, in one-letter code: C4-dicarboxylate transport protein (429 aa).

Transmembrane regions (helical) follow at residues 3–23, 44–64, 76–96, 144–164, 184–204, 222–242, 331–351, and 352–372; these read VSIF…GVLL, LIKM…IAGM, IALL…LVVV, AFAS…GFAL, VIFG…FGAM, LILC…GTIA, TLLV…GSGF, and IVLA…LALI.

The protein belongs to the dicarboxylate/amino acid:cation symporter (DAACS) (TC 2.A.23) family.

It is found in the cell inner membrane. Functionally, responsible for the transport of dicarboxylates such as succinate, fumarate, and malate from the periplasm across the membrane. The polypeptide is C4-dicarboxylate transport protein (Yersinia pestis bv. Antiqua (strain Antiqua)).